The sequence spans 431 residues: Nuclear receptor subfamily 1 group I member 2 (431 aa).

Positions 35–104 (LQICRVCGDK…RLRKCLESGM (70 aa)) form a DNA-binding region, nuclear receptor. NR C4-type zinc fingers lie at residues 38–58 (CRVC…CEGC) and 74–99 (CPFR…LRKC). Residues 63–89 (RRAMKRNVRLRCPFRKGTCEITRKTRR) carry the Bipartite nuclear localization signal motif. The interval 105–142 (KKEMIMSDAAVEQRRALIKRKKREKIEAPPPGGQGLTE) is hinge. The NR LBD domain maps to 143–430 (EQQALIQELM…LMQELFSSTD (288 aa)). Hyperforin-binding positions include S244 and 282 to 285 (ILRF).

This sequence belongs to the nuclear hormone receptor family. NR1 subfamily. As to quaternary structure, heterodimer with RXRA. Interacts with NCOA1. Interacts (via domain NR LBD) with CRY1 and CRY2 in a ligand-dependent manner.

The protein resides in the nucleus. Nuclear receptor that binds and is activated by a variety of endogenous and xenobiotic compounds. Transcription factor that activates the transcription of multiple genes involved in the metabolism and secretion of potentially harmful xenobiotics, endogenous compounds and drugs. Response to specific ligands is species-specific, due to differences in the ligand-binding domain. Binds to a response element in the promoters of the CYP3A4 and ABCB1/MDR1 genes. Activated by naturally occurring steroids such as pregnenolone and progesterone, the cholesterol metabolite 5-beta-cholestane-3-alpha,7-alpha,12-alpha-triol, synthetic glucocorticoids and antiglucocorticoids and 16-alpha-carbonitrile (PCN). This Mus musculus (Mouse) protein is Nuclear receptor subfamily 1 group I member 2 (Nr1i2).